A 309-amino-acid chain; its full sequence is uncharacterized protein (309 aa).

Residues 23–39 (RFNVAIIGGTGGLGRAI) traverse the membrane as a helical segment.

The protein belongs to the NmrA-type oxidoreductase family.

It localises to the membrane. This is an uncharacterized protein from Saccharomyces cerevisiae (strain ATCC 204508 / S288c) (Baker's yeast).